The chain runs to 200 residues: 3-isopropylmalate dehydratase small subunit (200 aa).

This sequence belongs to the LeuD family. LeuD type 1 subfamily. In terms of assembly, heterodimer of LeuC and LeuD.

The catalysed reaction is (2R,3S)-3-isopropylmalate = (2S)-2-isopropylmalate. Its pathway is amino-acid biosynthesis; L-leucine biosynthesis; L-leucine from 3-methyl-2-oxobutanoate: step 2/4. In terms of biological role, catalyzes the isomerization between 2-isopropylmalate and 3-isopropylmalate, via the formation of 2-isopropylmaleate. The chain is 3-isopropylmalate dehydratase small subunit (leuD) from Synechocystis sp. (strain ATCC 27184 / PCC 6803 / Kazusa).